Here is a 484-residue protein sequence, read N- to C-terminus: Malonate-semialdehyde dehydrogenase 1 (484 aa).

Residues Phe-154, Lys-178, Glu-181, Arg-182, and Ser-231 each contribute to the NAD(+) site. Residue Cys-286 is the Nucleophile of the active site. Residue Glu-384 coordinates NAD(+).

The protein belongs to the aldehyde dehydrogenase family. IolA subfamily. In terms of assembly, homotetramer.

It catalyses the reaction 3-oxopropanoate + NAD(+) + CoA + H2O = hydrogencarbonate + acetyl-CoA + NADH + H(+). It carries out the reaction 2-methyl-3-oxopropanoate + NAD(+) + CoA + H2O = propanoyl-CoA + hydrogencarbonate + NADH + H(+). It participates in polyol metabolism; myo-inositol degradation into acetyl-CoA; acetyl-CoA from myo-inositol: step 7/7. In terms of biological role, catalyzes the oxidation of malonate semialdehyde (MSA) and methylmalonate semialdehyde (MMSA) into acetyl-CoA and propanoyl-CoA, respectively. Is involved in a myo-inositol catabolic pathway. Bicarbonate, and not CO2, is the end-product of the enzymatic reaction. The chain is Malonate-semialdehyde dehydrogenase 1 from Bacillus licheniformis (strain ATCC 14580 / DSM 13 / JCM 2505 / CCUG 7422 / NBRC 12200 / NCIMB 9375 / NCTC 10341 / NRRL NRS-1264 / Gibson 46).